Here is a 332-residue protein sequence, read N- to C-terminus: 2,3-diketo-L-gulonate reductase (332 aa).

Catalysis depends on His-44, which acts as the Proton donor. Residues 168-174, 224-225, and 304-306 contribute to the NAD(+) site; these read ITMVDMS, WK, and GHE.

This sequence belongs to the LDH2/MDH2 oxidoreductase family. DlgD subfamily. Homodimer.

It localises to the cytoplasm. It carries out the reaction 3-dehydro-L-gulonate + NAD(+) = 2,3-dioxo-L-gulonate + NADH + H(+). The catalysed reaction is 3-dehydro-L-gulonate + NADP(+) = 2,3-dioxo-L-gulonate + NADPH + H(+). In terms of biological role, catalyzes the reduction of 2,3-diketo-L-gulonate in the presence of NADH, to form 3-keto-L-gulonate. This Escherichia coli O1:K1 / APEC protein is 2,3-diketo-L-gulonate reductase.